A 550-amino-acid chain; its full sequence is Cytochrome P450 monooxygenase hasH (550 aa).

Residues 39–59 (IGVLASIVVLVTVVIGPKAVI) traverse the membrane as a helical segment. Residue C493 participates in heme binding.

The protein belongs to the cytochrome P450 family. Heme is required as a cofactor.

Its subcellular location is the membrane. It participates in secondary metabolite biosynthesis. Cytochrome P450 monooxygenase; part of the gene cluster that mediates the biosynthesis of hexadehydro-astechrome (HAS), a tryptophan-derived iron(III)-complex that acts as a virulence factor in infected mice. Within the pathway, hasH, with the O-methyltransferase hasC and the FAD-linked oxidoreductase hasG, convert the hasE-prenylated Trp-Ala dipeptide into an O-methylated diketopiperazine that is then released from the hasD NRPS. The HAS biosynthesis begins with the synthesis of a tethered Trp-Ala dipeptide by the NRPS hasD. The 7-dimethylallyltryptophan synthase hasE then catalyzes the prenylation of the hasD-tethered tryptophan or the resulting tethered Trp-Ala dipeptide at the C-7 position of the indole moiety. HAS biosynthesis continues via tethered intermediates with the succesive action of the cytochrome P450 monooxygenase hasH, the O-methyltransferase hasC, and the FAD-linked oxidoreductase hasG. The resulting O-methylated diketopiperazine is then released from hasD. Finally, three O-methylated diketopiperazine molecules assemble in a trimeric complex with Fe(III) to produce hexadehydro-astechrome. In Aspergillus fumigatus (strain CBS 144.89 / FGSC A1163 / CEA10) (Neosartorya fumigata), this protein is Cytochrome P450 monooxygenase hasH.